We begin with the raw amino-acid sequence, 584 residues long: Cytochrome c oxidase subunit 1 (584 aa).

The segment at 1-25 (MTAVAPRVDGHVAPQRPEPTGHARK) is disordered. A helical membrane pass occupies residues 43–63 (IMYIIMSFSFFFLGGLMALLI). His-87 is a binding site for Fe(II)-heme a. 6 helical membrane-spanning segments follow: residues 90-110 (VMLL…VLPL), 122-142 (LNAF…TGFL), 171-191 (MWIV…INML), 214-234 (IFVV…AALG), 259-279 (LFWF…FGIV), and 292-312 (FGYV…MAVW). Residues His-265 and Tyr-269 each coordinate Cu cation. The 1'-histidyl-3'-tyrosine (His-Tyr) cross-link spans 265-269 (HPEVY). 2 residues coordinate Cu cation: His-314 and His-315. Transmembrane regions (helical) follow at residues 316–336 (MFVT…LISV) and 360–380 (MIWS…GIML). Residue His-398 participates in heme a3 binding. 3 helical membrane passes run 399-419 (FHYT…YFWF), 434-454 (IHFW…HWVG), and 477-497 (ISTV…WNVF). Position 400 (His-400) interacts with Fe(II)-heme a. The tract at residues 564–584 (HDDINAPELGTAPALASDSSR) is disordered.

As to quaternary structure, associates with subunits II, III and IV to form cytochrome c oxidase. The 4 subunit cytochrome c oxidase forms a supercomplex with the menaquinol-cytochrome c reductase complex (cytochrome bc1). Requires Cu(2+) as cofactor. The cofactor is heme.

Its subcellular location is the cell membrane. The enzyme catalyses 4 Fe(II)-[cytochrome c] + O2 + 8 H(+)(in) = 4 Fe(III)-[cytochrome c] + 2 H2O + 4 H(+)(out). The protein operates within energy metabolism; oxidative phosphorylation. Functionally, cytochrome c oxidase is the component of the respiratory chain that catalyzes the reduction of oxygen to water. Subunits 1-3 form the functional core of the enzyme complex. CO I is the catalytic subunit of the enzyme. Electrons originating in cytochrome c are transferred via the copper A center of subunit 2 and heme A of subunit 1 to the bimetallic center formed by heme A3 and copper B. The sequence is that of Cytochrome c oxidase subunit 1 (ctaD) from Corynebacterium glutamicum (strain ATCC 13032 / DSM 20300 / JCM 1318 / BCRC 11384 / CCUG 27702 / LMG 3730 / NBRC 12168 / NCIMB 10025 / NRRL B-2784 / 534).